The sequence spans 180 residues: Homeobox protein ceh-12 (180 aa).

A disordered region spans residues S15–S37. The homeobox DNA-binding region spans M110 to P169.

As to expression, expressed in VB motor neurons in the ventral nerve cord.

Its subcellular location is the nucleus. Its function is as follows. Transcription factor. Plays a role, downstream from homeobox protein unc-4 and Wnt signaling, in specifying synaptic inputs to A-class motor neurons. Involved in patterning of the synaptic outputs of the postmitotic DA class cholinergic motor neurons. The polypeptide is Homeobox protein ceh-12 (ceh-12) (Caenorhabditis elegans).